A 611-amino-acid chain; its full sequence is Elongation factor 4 (611 aa).

One can recognise a tr-type G domain in the interval 12-194 (SRIRNFSIIA…QIVEKVPAPA (183 aa)). Residues 24–29 (DHGKST) and 141–144 (NKID) each bind GTP.

The protein belongs to the TRAFAC class translation factor GTPase superfamily. Classic translation factor GTPase family. LepA subfamily.

The protein localises to the cell membrane. The catalysed reaction is GTP + H2O = GDP + phosphate + H(+). In terms of biological role, required for accurate and efficient protein synthesis under certain stress conditions. May act as a fidelity factor of the translation reaction, by catalyzing a one-codon backward translocation of tRNAs on improperly translocated ribosomes. Back-translocation proceeds from a post-translocation (POST) complex to a pre-translocation (PRE) complex, thus giving elongation factor G a second chance to translocate the tRNAs correctly. Binds to ribosomes in a GTP-dependent manner. The protein is Elongation factor 4 of Bacillus velezensis (strain DSM 23117 / BGSC 10A6 / LMG 26770 / FZB42) (Bacillus amyloliquefaciens subsp. plantarum).